Here is a 479-residue protein sequence, read N- to C-terminus: PRAME family member 18 (479 aa).

The LRR 1 repeat unit spans residues 15–38 (QSLLRDQALAISVLDELPRELFPP). One copy of the LRR 1; degenerate repeat lies at 97 to 124 (RWKLQVLEMRDVDENFWTIWSGARLLSC). The stretch at 179 to 203 (HLCCTKVVNYSMSILNFRNILETVY) is one LRR 2; degenerate repeat. The LRR 3; degenerate repeat unit spans residues 204–230 (PDSIQVLEIWNMCWLCMIVEFSRYLSQ). An LRR 4; degenerate repeat occupies 231–265 (MRNLRKLFISDGCRYLLSSDSQEQLVAEFSSVLLR). 5 LRR repeats span residues 266–291 (LENL…IRCL), 292–323 (RSPL…SQLK), 324–342 (QLNL…PLRA), 348–375 (AATL…ALSR), and 376–400 (CSNL…LLRH).

This sequence belongs to the PRAME family.

The protein is PRAME family member 18 of Homo sapiens (Human).